An 834-amino-acid chain; its full sequence is Probable glucan 1,3-beta-glucosidase D (834 aa).

Over residues 1-33 (MPSHSRSRDRYGGRDSDREARYDYDYARRRYAT) the composition is skewed to basic and acidic residues. Disordered regions lie at residues 1 to 188 (MPSH…ASHL) and 200 to 251 (QYEK…TKAR). Over 1–306 (MPSHSRSRDR…GGRPFWKRKK (306 aa)) the chain is Cytoplasmic. Residues 34 to 45 (DDNDDDYDDDEL) show a composition bias toward acidic residues. Composition is skewed to basic and acidic residues over residues 46 to 76 (EHGLNERRYRRDGYLPPRESRTRGYYERDAE), 98 to 173 (YGHD…ETAA), 201 to 218 (YEKEERRKRENAKDAAKA), and 228 to 245 (VVGEESRALRDPPGESHR). A helical; Signal-anchor for type II membrane protein membrane pass occupies residues 307–327 (WIGLGALILILVIVIPVAVVV). The Extracellular portion of the chain corresponds to 328-834 (SKKHDNKSDP…PDFGNLPEYY (507 aa)). Residues 331–354 (HDNKSDPADPQGTSPGKSNLDGLS) are disordered. 7 N-linked (GlcNAc...) asparagine glycosylation sites follow: Asn333, Asn379, Asn384, Asn396, Asn549, Asn561, and Asn570. The active-site Proton donor is Glu600. Residues Asn639, Asn672, and Asn692 are each glycosylated (N-linked (GlcNAc...) asparagine). The active-site Nucleophile is the Glu705.

It belongs to the glycosyl hydrolase 5 (cellulase A) family.

The protein localises to the cell membrane. It carries out the reaction Successive hydrolysis of beta-D-glucose units from the non-reducing ends of (1-&gt;3)-beta-D-glucans, releasing alpha-glucose.. Functionally, glucosidase involved in the degradation of cellulosic biomass. Active on lichenan. The chain is Probable glucan 1,3-beta-glucosidase D (exgD) from Neosartorya fischeri (strain ATCC 1020 / DSM 3700 / CBS 544.65 / FGSC A1164 / JCM 1740 / NRRL 181 / WB 181) (Aspergillus fischerianus).